The primary structure comprises 299 residues: Pyridoxal 5'-phosphate synthase subunit PdxS (299 aa).

Asp-24 lines the D-ribose 5-phosphate pocket. Lys-81 (schiff-base intermediate with D-ribose 5-phosphate) is an active-site residue. Gly-153 provides a ligand contact to D-ribose 5-phosphate. Arg-165 is a binding site for D-glyceraldehyde 3-phosphate. D-ribose 5-phosphate contacts are provided by residues Gly-219 and 240 to 241 (GS).

Belongs to the PdxS/SNZ family. In the presence of PdxT, forms a dodecamer of heterodimers.

It carries out the reaction aldehydo-D-ribose 5-phosphate + D-glyceraldehyde 3-phosphate + L-glutamine = pyridoxal 5'-phosphate + L-glutamate + phosphate + 3 H2O + H(+). It participates in cofactor biosynthesis; pyridoxal 5'-phosphate biosynthesis. In terms of biological role, catalyzes the formation of pyridoxal 5'-phosphate from ribose 5-phosphate (RBP), glyceraldehyde 3-phosphate (G3P) and ammonia. The ammonia is provided by the PdxT subunit. Can also use ribulose 5-phosphate and dihydroxyacetone phosphate as substrates, resulting from enzyme-catalyzed isomerization of RBP and G3P, respectively. The sequence is that of Pyridoxal 5'-phosphate synthase subunit PdxS from Methanococcus vannielii (strain ATCC 35089 / DSM 1224 / JCM 13029 / OCM 148 / SB).